Consider the following 428-residue polypeptide: Protein clpf-1 (428 aa).

The ATP site is built by glutamate 16 and arginine 56. Residues 99–118 (KKREEQAVSNSSKPKGPRLL) form a disordered region. Residue 124–129 (DVGKTT) coordinates ATP.

The protein belongs to the Clp1 family. Clp1 subfamily.

The protein localises to the nucleus. Functionally, required for endonucleolytic cleavage during polyadenylation-dependent pre-mRNA 3'-end formation. In Caenorhabditis briggsae, this protein is Protein clpf-1.